The following is a 279-amino-acid chain: NH(3)-dependent NAD(+) synthetase (279 aa).

46 to 53 (GVSGGQDS) serves as a coordination point for ATP. Aspartate 52 serves as a coordination point for Mg(2+). Residue arginine 139 participates in deamido-NAD(+) binding. Threonine 159 lines the ATP pocket. Mg(2+) is bound at residue glutamate 164. Positions 172 and 179 each coordinate deamido-NAD(+). Lysine 188 and threonine 210 together coordinate ATP. 259–260 (HK) serves as a coordination point for deamido-NAD(+).

The protein belongs to the NAD synthetase family. Homodimer.

The catalysed reaction is deamido-NAD(+) + NH4(+) + ATP = AMP + diphosphate + NAD(+) + H(+). It participates in cofactor biosynthesis; NAD(+) biosynthesis; NAD(+) from deamido-NAD(+) (ammonia route): step 1/1. Its function is as follows. Catalyzes the ATP-dependent amidation of deamido-NAD to form NAD. Uses ammonia as a nitrogen source. The protein is NH(3)-dependent NAD(+) synthetase of Leifsonia xyli subsp. xyli (strain CTCB07).